The chain runs to 318 residues: Probable mitochondrial 2-oxoglutarate/malate carrier protein (318 aa).

Solcar repeat units lie at residues 22–111 (QSQL…IKDI), 119–210 (LPFT…TKQL), and 219–309 (DDIK…LNIL). 6 helical membrane-spanning segments follow: residues 28-48 (FVIGGLAGMLSSAFTHPIDSL), 79-99 (GFFTLYKGLSASLLRQATYTT), 125-145 (IMVGMLSGAGGAIVGTPADLT), 185-205 (GCSPNLIRAMFMTAGQVSSYD), 225-245 (LIASTTAAFVAAVATSPLDVI), and 281-301 (FYKGFNPYFMRLGPQTILTFI).

This sequence belongs to the mitochondrial carrier (TC 2.A.29) family.

It is found in the mitochondrion inner membrane. Mitochondrial solute carriers shuttle metabolites, nucleotides, and cofactors through the mitochondrial inner membrane. Catalyzes the transport of 2-oxoglutarate across the inner mitochondrial membrane in an electroneutral exchange for malate or other dicarboxylic acids, and plays an important role in several metabolic processes, including the malate-aspartate shuttle, the oxoglutarate/isocitrate shuttle, in gluconeogenesis from lactate, and in nitrogen metabolism. The polypeptide is Probable mitochondrial 2-oxoglutarate/malate carrier protein (ucpC) (Dictyostelium discoideum (Social amoeba)).